We begin with the raw amino-acid sequence, 206 residues long: Ribosomal RNA small subunit methyltransferase G (206 aa).

S-adenosyl-L-methionine contacts are provided by residues G71, F76, 122 to 123, and R135; that span reads AE.

It belongs to the methyltransferase superfamily. RNA methyltransferase RsmG family.

The protein localises to the cytoplasm. In terms of biological role, specifically methylates the N7 position of a guanine in 16S rRNA. In Bacteroides fragilis (strain ATCC 25285 / DSM 2151 / CCUG 4856 / JCM 11019 / LMG 10263 / NCTC 9343 / Onslow / VPI 2553 / EN-2), this protein is Ribosomal RNA small subunit methyltransferase G.